The chain runs to 198 residues: MGSPRPVVLSGPSGAGKSTLLKKLLQEHSSIFGFSVSHTTRDPRPGEENGKDYYFVTREVMQRDIAAGDFIEHAEFSGNLYGTSKAAVRAVQAMNRICVLDVDLQGVRNIKKTDLQPIYIFVQPPSLDVLEQRLRQRNTETEESLAKRLAAAKADMESSKEPGLFDLIIINDSLDKAYWALKEALSEEIKKAQATGHS.

G2 carries the N-acetylglycine modification. Residues 4-186 form the Guanylate kinase-like domain; it reads PRPVVLSGPS…AYWALKEALS (183 aa). 14-19 lines the ATP pocket; it reads GAGKST. Position 37–51 (37–51) interacts with substrate; it reads SHTTRDPRPGEENGK. Residues R44, R137, and R148 contribute to the active site. 171–172 provides a ligand contact to ATP; sequence ND.

This sequence belongs to the guanylate kinase family. Monomer. Interacts with RD3.

The protein localises to the photoreceptor inner segment. It localises to the cytoplasm. The protein resides in the cytosol. It catalyses the reaction GMP + ATP = GDP + ADP. Up-regulated by RD3. Functionally, catalyzes the phosphorylation of GMP to GDP. Essential enzyme for recycling GMP and indirectly, cyclic GMP (cGMP). Involved in the cGMP metabolism in photoreceptors. The chain is Guanylate kinase (GUK1) from Sus scrofa (Pig).